We begin with the raw amino-acid sequence, 254 residues long: uncharacterized protein (254 aa).

This is an uncharacterized protein from Escherichia coli (strain K12).